The sequence spans 478 residues: Lysine histidine transporter-like 7 (478 aa).

Topologically, residues 1 to 63 are cytoplasmic; that stretch reads MSIALGNLFD…ITESRKGNVY (63 aa). A disordered region spans residues 15-45; the sequence is ESGGSPLFMSPAPSTDPQPISGEKNGGDGGR. Residues 64-86 traverse the membrane as a helical segment; it reads TATFHLLCSGIGLQVILLPAAFA. Residues 87–89 lie on the Extracellular side of the membrane; it reads ALG. The helical transmembrane segment at 90 to 112 threads the bilayer; sequence WVWGTIILTVGFVWKLYTTWLLV. Topologically, residues 113-140 are cytoplasmic; that stretch reads QLHEAVPGIRISRYVRLAIASFGVKLGK. Residues 141 to 161 form a helical membrane-spanning segment; it reads LLGIFPVMYLSGGACTILVIT. At 162-177 the chain is on the extracellular side; sequence GGKSIQQLLQIMSDDN. Residues 178 to 198 form a helical membrane-spanning segment; it reads TAPLTSVQCFLVFSCIAMIMS. Topologically, residues 199 to 205 are cytoplasmic; sequence QFPNLNS. Residues 206 to 226 form a helical membrane-spanning segment; that stretch reads LFGVSLIGAFMGIAYCTVIWI. Over 227-241 the chain is Extracellular; that stretch reads LPVASDSQRTQVSVS. A helical transmembrane segment spans residues 242-262; that stretch reads YATMDKSFVHIFNAIGLIALV. Topologically, residues 263 to 291 are cytoplasmic; that stretch reads YRGNNLVLEIQGTLPSDSKNPSCKTMWRA. A helical transmembrane segment spans residues 292-312; sequence VMISHALVAICMFPLTFAVYW. The Extracellular segment spans residues 313-340; the sequence is AYGDKIPATGGPVGNYLKLYTQEHSKRA. Residues 341-361 traverse the membrane as a helical segment; that stretch reads ACFIHLTFIFSCLCSYPINLM. Residues 362–379 are Cytoplasmic-facing; that stretch reads PACDNIEMVYITKKKKPA. Residues 380 to 402 form a helical membrane-spanning segment; it reads SIIVRMMLRVFLSLVCFTIAVGF. Topologically, residues 403 to 406 are extracellular; it reads PFLP. The chain crosses the membrane as a helical span at residues 407 to 429; that stretch reads YLAVLIGAIALLVTFTYPCFMWI. At 430-439 the chain is on the cytoplasmic side; the sequence is SIKKPQRKSP. A helical membrane pass occupies residues 440 to 460; it reads MWLFNVLVGCLGASLSVLLLV. The Extracellular segment spans residues 461–478; sequence ASAMRLAQKGLHANFFRP.

The protein belongs to the amino acid/polyamine transporter 2 family. Amino acid/auxin permease (AAAP) (TC 2.A.18.2) subfamily.

It is found in the cell membrane. Amino acid transporter. The chain is Lysine histidine transporter-like 7 from Arabidopsis thaliana (Mouse-ear cress).